The chain runs to 968 residues: RNA polymerase-associated protein RapA (968 aa).

The 171-residue stretch at 164–334 (DVGRRHAPRV…FARLRLLDPN (171 aa)) folds into the Helicase ATP-binding domain. 177–184 (DEVGLGKT) serves as a coordination point for ATP. A DEAH box motif is present at residues 280–283 (DEAH). The Helicase C-terminal domain occupies 490 to 662 (RVEWLMGYLT…YLASPDQTEG (173 aa)).

This sequence belongs to the SNF2/RAD54 helicase family. RapA subfamily. As to quaternary structure, interacts with the RNAP. Has a higher affinity for the core RNAP than for the holoenzyme. Its ATPase activity is stimulated by binding to RNAP.

Its function is as follows. Transcription regulator that activates transcription by stimulating RNA polymerase (RNAP) recycling in case of stress conditions such as supercoiled DNA or high salt concentrations. Probably acts by releasing the RNAP, when it is trapped or immobilized on tightly supercoiled DNA. Does not activate transcription on linear DNA. Probably not involved in DNA repair. This is RNA polymerase-associated protein RapA from Escherichia coli O139:H28 (strain E24377A / ETEC).